The sequence spans 167 residues: Mitochondrial inner membrane protease subunit 1 (167 aa).

Catalysis depends on residues Ser40 and Lys83.

Belongs to the peptidase S26 family. IMP1 subfamily. As to quaternary structure, heterodimer of 2 subunits, IMMPL1 and IMMPL2.

The protein localises to the mitochondrion inner membrane. Its function is as follows. Catalyzes the removal of transit peptides required for the targeting of proteins from the mitochondrial matrix, across the inner membrane, into the inter-membrane space. The sequence is that of Mitochondrial inner membrane protease subunit 1 (immp1l) from Xenopus tropicalis (Western clawed frog).